A 309-amino-acid chain; its full sequence is Cytidine deaminase (309 aa).

CMP/dCMP-type deaminase domains are found at residues 48 to 168 and 200 to 309; these read DEDA…FGPR and DDND…SLSL. Residue 89–91 participates in substrate binding; it reads NME. Zn(2+) is bound at residue His-102. Glu-104 functions as the Proton donor in the catalytic mechanism. Residues Cys-129 and Cys-132 each coordinate Zn(2+).

Belongs to the cytidine and deoxycytidylate deaminase family. As to quaternary structure, homodimer. It depends on Zn(2+) as a cofactor.

It catalyses the reaction cytidine + H2O + H(+) = uridine + NH4(+). The enzyme catalyses 2'-deoxycytidine + H2O + H(+) = 2'-deoxyuridine + NH4(+). This enzyme scavenges exogenous and endogenous cytidine and 2'-deoxycytidine for UMP synthesis. The polypeptide is Cytidine deaminase (Sodalis glossinidius (strain morsitans)).